The primary structure comprises 109 residues: Ribonuclease P protein component (109 aa).

This sequence belongs to the RnpA family. As to quaternary structure, consists of a catalytic RNA component (M1 or rnpB) and a protein subunit.

The catalysed reaction is Endonucleolytic cleavage of RNA, removing 5'-extranucleotides from tRNA precursor.. Its function is as follows. RNaseP catalyzes the removal of the 5'-leader sequence from pre-tRNA to produce the mature 5'-terminus. It can also cleave other RNA substrates such as 4.5S RNA. The protein component plays an auxiliary but essential role in vivo by binding to the 5'-leader sequence and broadening the substrate specificity of the ribozyme. The polypeptide is Ribonuclease P protein component (Mycoplasma mycoides subsp. mycoides SC (strain CCUG 32753 / NCTC 10114 / PG1)).